An 837-amino-acid chain; its full sequence is Protein translocase subunit SecA 1 (837 aa).

ATP-binding positions include Gln-85, 103–107, and Asp-492; that span reads GEGKT. Residues 791 to 837 form a disordered region; the sequence is KGEAINPAEGKPEAKRQPIRKDQHIGRNDPCPCGSGKKYKNCHGKEA. Residues 800–817 are compositionally biased toward basic and acidic residues; sequence GKPEAKRQPIRKDQHIGR. The Zn(2+) site is built by Cys-821, Cys-823, Cys-832, and His-833. The span at 827–837 shows a compositional bias: basic residues; the sequence is KKYKNCHGKEA.

The protein belongs to the SecA family. Monomer and homodimer. Part of the essential Sec protein translocation apparatus which comprises SecA, SecYEG and auxiliary proteins SecDF. Other proteins may also be involved. Requires Zn(2+) as cofactor.

Its subcellular location is the cell membrane. The protein resides in the cytoplasm. It catalyses the reaction ATP + H2O + cellular proteinSide 1 = ADP + phosphate + cellular proteinSide 2.. Its function is as follows. Part of the Sec protein translocase complex. Interacts with the SecYEG preprotein conducting channel. Has a central role in coupling the hydrolysis of ATP to the transfer of proteins into and across the cell membrane, serving as an ATP-driven molecular motor driving the stepwise translocation of polypeptide chains across the membrane. The protein is Protein translocase subunit SecA 1 of Listeria monocytogenes serovar 1/2a (strain ATCC BAA-679 / EGD-e).